The chain runs to 187 residues: Peptidyl-tRNA hydrolase (187 aa).

Tyrosine 14 provides a ligand contact to tRNA. Histidine 19 functions as the Proton acceptor in the catalytic mechanism. TRNA contacts are provided by tyrosine 60, asparagine 62, and asparagine 108.

This sequence belongs to the PTH family. Monomer.

The protein resides in the cytoplasm. It carries out the reaction an N-acyl-L-alpha-aminoacyl-tRNA + H2O = an N-acyl-L-amino acid + a tRNA + H(+). Functionally, hydrolyzes ribosome-free peptidyl-tRNAs (with 1 or more amino acids incorporated), which drop off the ribosome during protein synthesis, or as a result of ribosome stalling. Catalyzes the release of premature peptidyl moieties from peptidyl-tRNA molecules trapped in stalled 50S ribosomal subunits, and thus maintains levels of free tRNAs and 50S ribosomes. This is Peptidyl-tRNA hydrolase from Mycoplasmopsis synoviae (strain 53) (Mycoplasma synoviae).